Reading from the N-terminus, the 195-residue chain is dITP/XTP pyrophosphatase (195 aa).

Residue 9–14 participates in substrate binding; sequence TNNQGK. The Mg(2+) site is built by glutamate 39 and aspartate 68. The active-site Proton acceptor is aspartate 68. Residues serine 69, 146 to 149, lysine 169, and 174 to 175 contribute to the substrate site; these read FGYD and HR.

It belongs to the HAM1 NTPase family. Homodimer. Mg(2+) serves as cofactor.

The enzyme catalyses XTP + H2O = XMP + diphosphate + H(+). The catalysed reaction is dITP + H2O = dIMP + diphosphate + H(+). It carries out the reaction ITP + H2O = IMP + diphosphate + H(+). Its function is as follows. Pyrophosphatase that catalyzes the hydrolysis of nucleoside triphosphates to their monophosphate derivatives, with a high preference for the non-canonical purine nucleotides XTP (xanthosine triphosphate), dITP (deoxyinosine triphosphate) and ITP. Seems to function as a house-cleaning enzyme that removes non-canonical purine nucleotides from the nucleotide pool, thus preventing their incorporation into DNA/RNA and avoiding chromosomal lesions. The protein is dITP/XTP pyrophosphatase of Gloeobacter violaceus (strain ATCC 29082 / PCC 7421).